Consider the following 110-residue polypeptide: UPF0132 membrane protein MJ1443 (110 aa).

The next 3 helical transmembrane spans lie at 15-35 (IEGALCYLFGVITGILFYILE), 49-69 (IILFGGLWVLSIILAFIPYGW), and 70-90 (MLSGLVNLAAFILWIVCMYKA).

Belongs to the UPF0132 family.

It localises to the cell membrane. The protein is UPF0132 membrane protein MJ1443 of Methanocaldococcus jannaschii (strain ATCC 43067 / DSM 2661 / JAL-1 / JCM 10045 / NBRC 100440) (Methanococcus jannaschii).